The following is a 469-amino-acid chain: ATP synthase subunit beta (469 aa).

Position 156 to 163 (156 to 163 (GGAGVGKT)) interacts with ATP.

It belongs to the ATPase alpha/beta chains family. F-type ATPases have 2 components, CF(1) - the catalytic core - and CF(0) - the membrane proton channel. CF(1) has five subunits: alpha(3), beta(3), gamma(1), delta(1), epsilon(1). CF(0) has three main subunits: a(1), b(2) and c(9-12). The alpha and beta chains form an alternating ring which encloses part of the gamma chain. CF(1) is attached to CF(0) by a central stalk formed by the gamma and epsilon chains, while a peripheral stalk is formed by the delta and b chains.

It is found in the cell membrane. It carries out the reaction ATP + H2O + 4 H(+)(in) = ADP + phosphate + 5 H(+)(out). Its function is as follows. Produces ATP from ADP in the presence of a proton gradient across the membrane. The catalytic sites are hosted primarily by the beta subunits. This is ATP synthase subunit beta from Lactococcus lactis subsp. cremoris (strain SK11).